Here is a 100-residue protein sequence, read N- to C-terminus: Aspartyl/glutamyl-tRNA(Asn/Gln) amidotransferase subunit C (100 aa).

It belongs to the GatC family. In terms of assembly, heterotrimer of A, B and C subunits.

The catalysed reaction is L-glutamyl-tRNA(Gln) + L-glutamine + ATP + H2O = L-glutaminyl-tRNA(Gln) + L-glutamate + ADP + phosphate + H(+). It carries out the reaction L-aspartyl-tRNA(Asn) + L-glutamine + ATP + H2O = L-asparaginyl-tRNA(Asn) + L-glutamate + ADP + phosphate + 2 H(+). Its function is as follows. Allows the formation of correctly charged Asn-tRNA(Asn) or Gln-tRNA(Gln) through the transamidation of misacylated Asp-tRNA(Asn) or Glu-tRNA(Gln) in organisms which lack either or both of asparaginyl-tRNA or glutaminyl-tRNA synthetases. The reaction takes place in the presence of glutamine and ATP through an activated phospho-Asp-tRNA(Asn) or phospho-Glu-tRNA(Gln). This Rickettsia bellii (strain RML369-C) protein is Aspartyl/glutamyl-tRNA(Asn/Gln) amidotransferase subunit C.